The following is a 261-amino-acid chain: Indole-3-glycerol phosphate synthase (261 aa).

Belongs to the TrpC family.

The enzyme catalyses 1-(2-carboxyphenylamino)-1-deoxy-D-ribulose 5-phosphate + H(+) = (1S,2R)-1-C-(indol-3-yl)glycerol 3-phosphate + CO2 + H2O. Its pathway is amino-acid biosynthesis; L-tryptophan biosynthesis; L-tryptophan from chorismate: step 4/5. The sequence is that of Indole-3-glycerol phosphate synthase from Burkholderia lata (strain ATCC 17760 / DSM 23089 / LMG 22485 / NCIMB 9086 / R18194 / 383).